We begin with the raw amino-acid sequence, 552 residues long: CTP synthase (552 aa).

Residues 1–265 are amidoligase domain; it reads MTKYIFITGG…DEIVVRKLRL (265 aa). CTP is bound at residue Ser-13. UTP is bound at residue Ser-13. Residues 14-19 and Asp-71 each bind ATP; that span reads SLGKGI. Asp-71 and Glu-139 together coordinate Mg(2+). CTP-binding positions include 146–148, 186–191, and Lys-222; these read DIE and KTKPTQ. UTP-binding positions include 186–191 and Lys-222; that span reads KTKPTQ. One can recognise a Glutamine amidotransferase type-1 domain in the interval 290–541; sequence TVAMVGKYVN…VRAARARSEG (252 aa). Residue Gly-351 participates in L-glutamine binding. Cys-378 (nucleophile; for glutamine hydrolysis) is an active-site residue. L-glutamine contacts are provided by residues 379-382, Glu-402, and Arg-469; that span reads LGMQ. Active-site residues include His-514 and Glu-516.

This sequence belongs to the CTP synthase family. As to quaternary structure, homotetramer.

It carries out the reaction UTP + L-glutamine + ATP + H2O = CTP + L-glutamate + ADP + phosphate + 2 H(+). It catalyses the reaction L-glutamine + H2O = L-glutamate + NH4(+). The enzyme catalyses UTP + NH4(+) + ATP = CTP + ADP + phosphate + 2 H(+). The protein operates within pyrimidine metabolism; CTP biosynthesis via de novo pathway; CTP from UDP: step 2/2. With respect to regulation, allosterically activated by GTP, when glutamine is the substrate; GTP has no effect on the reaction when ammonia is the substrate. The allosteric effector GTP functions by stabilizing the protein conformation that binds the tetrahedral intermediate(s) formed during glutamine hydrolysis. Inhibited by the product CTP, via allosteric rather than competitive inhibition. Catalyzes the ATP-dependent amination of UTP to CTP with either L-glutamine or ammonia as the source of nitrogen. Regulates intracellular CTP levels through interactions with the four ribonucleotide triphosphates. The sequence is that of CTP synthase from Methylococcus capsulatus (strain ATCC 33009 / NCIMB 11132 / Bath).